Consider the following 142-residue polypeptide: Transcriptional regulator MraZ (142 aa).

2 consecutive SpoVT-AbrB domains span residues 5-51 (ASSL…PRNE) and 77-120 (AMDV…DAAT).

It belongs to the MraZ family. Forms oligomers.

The protein localises to the cytoplasm. It localises to the nucleoid. The sequence is that of Transcriptional regulator MraZ from Polaromonas sp. (strain JS666 / ATCC BAA-500).